A 464-amino-acid chain; its full sequence is MTWNMLLALLPLLVLFGGSITVLFLSERRALLSAAMCAVVAAGFAWWPASLEAAGTPLVASNLFARGCLTLWALLGAATCLLSDRYRGSRKLAAREYAALTLFAVLGMAILSASTSLVSLFLGLESMTLAFYVLIAVDRENPTGAEAGLKYLLPGFLASALLAFGIALVYAATGTFELSAAISLSMAGAPMPSIALLGWTLIMAAAAFKASLAPFHLWTPDVYQGASAPIAGFLASGSKGAVFAVLLGSAPLALIVPLRPLLGGLAALSMIWGTLAALRQTNLKRMLAYSSVVHMGYLVLAVLSNRSAGMEAGLFYLLTYSAATVGTFGLLASMVDSGGEPQDYAALEGLAGRSPWRAVLLTGLLLSLAGFPPLAGFMGKFVLFGAALQSGYVGLVVLALLSSLISCYYYLRPVLYLFRVRQGAPTVPAFNNCERLIFVLCAGVTLVAGLYPGPFFRWFGAMLP.

A run of 13 helical transmembrane segments spans residues 5-25 (MLLA…VLFL), 31-51 (LLSA…PASL), 63-83 (LFAR…CLLS), 96-116 (EYAA…ASTS), 117-137 (LVSL…LIAV), 152-172 (LLPG…VYAA), 188-208 (GAPM…AAAF), 242-262 (VFAV…RPLL), 286-303 (MLAY…LAVL), 312-332 (AGLF…GLLA), 358-378 (AVLL…AGFM), 393-415 (VGLV…RPVL), and 436-456 (LIFV…GPFF).

This sequence belongs to the complex I subunit 2 family. As to quaternary structure, NDH-1 is composed of 14 different subunits. Subunits NuoA, H, J, K, L, M, N constitute the membrane sector of the complex.

It is found in the cell inner membrane. It catalyses the reaction a quinone + NADH + 5 H(+)(in) = a quinol + NAD(+) + 4 H(+)(out). NDH-1 shuttles electrons from NADH, via FMN and iron-sulfur (Fe-S) centers, to quinones in the respiratory chain. The immediate electron acceptor for the enzyme in this species is believed to be ubiquinone. Couples the redox reaction to proton translocation (for every two electrons transferred, four hydrogen ions are translocated across the cytoplasmic membrane), and thus conserves the redox energy in a proton gradient. This chain is NADH-quinone oxidoreductase subunit N, found in Syntrophotalea carbinolica (strain DSM 2380 / NBRC 103641 / GraBd1) (Pelobacter carbinolicus).